The following is a 246-amino-acid chain: Ribonuclease PH (246 aa).

Phosphate-binding positions include Arg-95 and 133–135 (GTR).

This sequence belongs to the RNase PH family. In terms of assembly, homohexameric ring arranged as a trimer of dimers.

The enzyme catalyses tRNA(n+1) + phosphate = tRNA(n) + a ribonucleoside 5'-diphosphate. Phosphorolytic 3'-5' exoribonuclease that plays an important role in tRNA 3'-end maturation. Removes nucleotide residues following the 3'-CCA terminus of tRNAs; can also add nucleotides to the ends of RNA molecules by using nucleoside diphosphates as substrates, but this may not be physiologically important. Probably plays a role in initiation of 16S rRNA degradation (leading to ribosome degradation) during starvation. The sequence is that of Ribonuclease PH from Bordetella bronchiseptica (strain ATCC BAA-588 / NCTC 13252 / RB50) (Alcaligenes bronchisepticus).